Reading from the N-terminus, the 20-residue chain is C-reactive protein (20 aa).

Positions 1 to 20 constitute a Pentraxin (PTX) domain; it reads SPVAASYRATAGLAGKALDF.

It belongs to the pentraxin family. Homodimer; disulfide-linked. It is not known if it assembles into a pentraxin (or pentaxin) structure. Pentraxins have a discoid arrangement of 5 non-covalently bound subunits. In terms of processing, glycosylated.

Its subcellular location is the secreted. Functionally, displays several functions associated with host defense: it promotes agglutination, bacterial capsular swelling, phagocytosis, and complement fixation through its calcium-dependent binding to phosphorylcholine. The protein is C-reactive protein of Mustelus canis (Smooth dogfish).